Consider the following 363-residue polypeptide: Small ribosomal subunit biogenesis GTPase RsgA (363 aa).

The 157-residue stretch at 112-268 folds into the CP-type G domain; that stretch reads HQQVIAANID…LIDTPGMREL (157 aa). GTP is bound by residues 157–160 and 210–218; these read TKAD and GSSGAGKST. Residues C291, C296, H298, and C304 each coordinate Zn(2+). Positions 340-363 are disordered; the sequence is RVAQNNRGKGSGKRPASIDRPGRR.

This sequence belongs to the TRAFAC class YlqF/YawG GTPase family. RsgA subfamily. As to quaternary structure, monomer. Associates with 30S ribosomal subunit, binds 16S rRNA. It depends on Zn(2+) as a cofactor.

Its subcellular location is the cytoplasm. Its function is as follows. One of several proteins that assist in the late maturation steps of the functional core of the 30S ribosomal subunit. Helps release RbfA from mature subunits. May play a role in the assembly of ribosomal proteins into the subunit. Circularly permuted GTPase that catalyzes slow GTP hydrolysis, GTPase activity is stimulated by the 30S ribosomal subunit. This chain is Small ribosomal subunit biogenesis GTPase RsgA, found in Xanthomonas oryzae pv. oryzae (strain PXO99A).